Here is a 500-residue protein sequence, read N- to C-terminus: Cytochrome P450 2D28 (500 aa).

Cysteine 446 provides a ligand contact to heme.

It belongs to the cytochrome P450 family. The cofactor is heme.

It is found in the endoplasmic reticulum membrane. The protein localises to the microsome membrane. The polypeptide is Cytochrome P450 2D28 (CYP2D28A) (Mesocricetus auratus (Golden hamster)).